The following is a 130-amino-acid chain: Small ribosomal subunit protein uS8 (130 aa).

This sequence belongs to the universal ribosomal protein uS8 family. Part of the 30S ribosomal subunit. Contacts proteins S5 and S12.

In terms of biological role, one of the primary rRNA binding proteins, it binds directly to 16S rRNA central domain where it helps coordinate assembly of the platform of the 30S subunit. The polypeptide is Small ribosomal subunit protein uS8 (Teredinibacter turnerae (strain ATCC 39867 / T7901)).